We begin with the raw amino-acid sequence, 271 residues long: Formamidopyrimidine-DNA glycosylase (271 aa).

Residue P2 is the Schiff-base intermediate with DNA of the active site. E3 (proton donor) is an active-site residue. The active-site Proton donor; for beta-elimination activity is the K57. DNA is bound by residues H90, R109, and K151. An FPG-type zinc finger spans residues 236–270 (HVYGRGSKSCTHCGNLLSEIRLGQRTTVFCGLCQT). The active-site Proton donor; for delta-elimination activity is R260.

This sequence belongs to the FPG family. In terms of assembly, monomer. The cofactor is Zn(2+).

It carries out the reaction Hydrolysis of DNA containing ring-opened 7-methylguanine residues, releasing 2,6-diamino-4-hydroxy-5-(N-methyl)formamidopyrimidine.. The catalysed reaction is 2'-deoxyribonucleotide-(2'-deoxyribose 5'-phosphate)-2'-deoxyribonucleotide-DNA = a 3'-end 2'-deoxyribonucleotide-(2,3-dehydro-2,3-deoxyribose 5'-phosphate)-DNA + a 5'-end 5'-phospho-2'-deoxyribonucleoside-DNA + H(+). In terms of biological role, involved in base excision repair of DNA damaged by oxidation or by mutagenic agents. Acts as a DNA glycosylase that recognizes and removes damaged bases. Has a preference for oxidized purines, such as 7,8-dihydro-8-oxoguanine (8-oxoG). Has AP (apurinic/apyrimidinic) lyase activity and introduces nicks in the DNA strand. Cleaves the DNA backbone by beta-delta elimination to generate a single-strand break at the site of the removed base with both 3'- and 5'-phosphates. This is Formamidopyrimidine-DNA glycosylase from Shewanella denitrificans (strain OS217 / ATCC BAA-1090 / DSM 15013).